The chain runs to 327 residues: Probable cell division protein WhiA (327 aa).

The segment at residues serine 275 to lysine 308 is a DNA-binding region (H-T-H motif).

The protein belongs to the WhiA family.

Involved in cell division and chromosome segregation. The polypeptide is Probable cell division protein WhiA (Mycobacterium leprae (strain Br4923)).